A 257-amino-acid chain; its full sequence is Nickel import system ATP-binding protein NikD (257 aa).

The ABC transporter domain maps to 4–245 (IDIQNLTIKN…HLHPYTERLI (242 aa)). 37–44 (GESGAGKS) serves as a coordination point for ATP.

It belongs to the ABC transporter superfamily. The complex is composed of two ATP-binding proteins (NikD and NikE), two transmembrane proteins (NikB and NikC) and a solute-binding protein (NikA).

It localises to the cell membrane. It catalyses the reaction Ni(2+)(out) + ATP + H2O = Ni(2+)(in) + ADP + phosphate + H(+). Part of the ABC transporter complex NikABCDE (Opp2) involved in nickel import. Probably responsible for energy coupling to the transport system. This Staphylococcus aureus (strain MW2) protein is Nickel import system ATP-binding protein NikD.